The chain runs to 160 residues: Urease accessory protein UreE (160 aa).

This sequence belongs to the UreE family.

The protein resides in the cytoplasm. Its function is as follows. Involved in urease metallocenter assembly. Binds nickel. Probably functions as a nickel donor during metallocenter assembly. The chain is Urease accessory protein UreE from Acinetobacter baumannii (strain AB307-0294).